Consider the following 226-residue polypeptide: Apoptosis regulator OPG045 (226 aa).

This sequence belongs to the orthopoxvirus OPG045 family. Homodimer. Interacts with host pro-apoptotic protein BCL2L11 (via BH3 domain). Interacts with host NLRP1. Interacts with host BAK.

It is found in the host mitochondrion outer membrane. The protein localises to the host cytoplasm. In terms of biological role, plays a role in evading host innate immune response by inhibiting host inflammasome activation. Interacts with and inhibits NLR-mediated interleukin-1 beta/IL1B production in infected cells. At the host mitochondria outer membrane, interacts with the BH3 domain of host BAK and prevents BAK from binding active BAX. In turn, host apoptosis is inhibited. The protein is Apoptosis regulator OPG045 (OPG045) of Vaccinia virus (strain Copenhagen) (VACV).